The chain runs to 237 residues: 2-C-methyl-D-erythritol 4-phosphate cytidylyltransferase (237 aa).

The protein belongs to the IspD/TarI cytidylyltransferase family. IspD subfamily.

The catalysed reaction is 2-C-methyl-D-erythritol 4-phosphate + CTP + H(+) = 4-CDP-2-C-methyl-D-erythritol + diphosphate. It participates in isoprenoid biosynthesis; isopentenyl diphosphate biosynthesis via DXP pathway; isopentenyl diphosphate from 1-deoxy-D-xylulose 5-phosphate: step 2/6. Functionally, catalyzes the formation of 4-diphosphocytidyl-2-C-methyl-D-erythritol from CTP and 2-C-methyl-D-erythritol 4-phosphate (MEP). In Clostridioides difficile (strain 630) (Peptoclostridium difficile), this protein is 2-C-methyl-D-erythritol 4-phosphate cytidylyltransferase.